The sequence spans 200 residues: Inducible T-cell costimulator (200 aa).

Residues 1-20 (MKPYFSCVFVFCFLIKLLTG) form the signal peptide. Residues 21-145 (ELNDLANHRM…LCCQLKLWLP (125 aa)) are Extracellular-facing. The 104-residue stretch at 30-133 (MFSFHDGGVQ…LSGGYLLIYE (104 aa)) folds into the Ig-like V-type domain. 2 disulfides stabilise this stretch: C42–C109 and C63–C83. 2 N-linked (GlcNAc...) asparagine glycosylation sites follow: N89 and N123. Residues 146–166 (VGCAAFVAALLFGCIFIVWFA) form a helical membrane-spanning segment. Topologically, residues 167–200 (KKKYRSSVHDPNSEYMFMAAVNTNKKSRLAGMTS) are cytoplasmic.

In terms of assembly, homodimer; disulfide-linked. Interacts with ICOSLG. Interacts with PIK3R1. Interacts with TBK1; this interaction is critical for the maturation of T follicular regulatory cells. N-glycosylated. As to expression, strongly expressed in the spleen and lung. Lower expression seen in liver, kidney and testis.

The protein localises to the cell membrane. Its function is as follows. Stimulatory receptor expressed in activated or antigen-experienced T-cells that plays an important role in the immune response. Upon binding to its ligand ICOSL expressed on antigen presenting cells (APCs), delivers costimulatory signals that enhances all basic T-cell responses to a foreign antigen, namely proliferation, secretion of lymphokines including IL10, up-regulation of molecules that mediate cell-cell interaction, and effective help for antibody secretion by B-cells. Also acts as a costimulatory receptor critical for the differentiation of T follicular regulatory cells upon immune challenges such as viral infection. Mechanistically, potentiates TCR-induced calcium flux by augmenting PLCG1 activation and actin remodeling. In addition, activates PI3K signaling pathways independently of calcium flux. Essential both for efficient interaction between T and B-cells and for normal antibody responses to T-cell dependent antigens. Prevents the apoptosis of pre-activated T-cells. Plays a critical role in CD40-mediated class switching of immunoglobin isotypes. The polypeptide is Inducible T-cell costimulator (Icos) (Rattus norvegicus (Rat)).